The chain runs to 1057 residues: Probable E3 ubiquitin-protein ligase HERC4 (1057 aa).

RCC1 repeat units lie at residues 1–51 (MLCW…FVLD), 52–101 (DGTV…ALND), 102–154 (KGQV…ALSK), 156–207 (SEVF…VLTL), 208–259 (SGAI…ALTK), 261–311 (GGVF…AFVP), and 313–368 (SGRI…KRIF). The 328-residue stretch at 730–1057 (KNIDYKKPLK…IDHNEGFSLI (328 aa)) folds into the HECT domain. Cys1025 (glycyl thioester intermediate) is an active-site residue.

In terms of tissue distribution, expressed in brain and testis and detected in heart and placenta.

The protein resides in the cytoplasm. It is found in the cytosol. It catalyses the reaction S-ubiquitinyl-[E2 ubiquitin-conjugating enzyme]-L-cysteine + [acceptor protein]-L-lysine = [E2 ubiquitin-conjugating enzyme]-L-cysteine + N(6)-ubiquitinyl-[acceptor protein]-L-lysine.. Its pathway is protein modification; protein ubiquitination. In terms of biological role, probable E3 ubiquitin-protein ligase involved in either protein trafficking or in the distribution of cellular structures. Required for spermatozoon maturation and fertility, and for the removal of the cytoplasmic droplet of the spermatozoon. E3 ubiquitin-protein ligases accept ubiquitin from an E2 ubiquitin-conjugating enzyme in the form of a thioester and then directly transfer it to targeted substrates. This is Probable E3 ubiquitin-protein ligase HERC4 (HERC4) from Homo sapiens (Human).